Reading from the N-terminus, the 255-residue chain is 5'-nucleotidase SurE (255 aa).

A divalent metal cation is bound by residues D8, D9, S39, and N91.

Belongs to the SurE nucleotidase family. Requires a divalent metal cation as cofactor.

It localises to the cytoplasm. It carries out the reaction a ribonucleoside 5'-phosphate + H2O = a ribonucleoside + phosphate. Functionally, nucleotidase that shows phosphatase activity on nucleoside 5'-monophosphates. In Acinetobacter baumannii (strain SDF), this protein is 5'-nucleotidase SurE.